A 200-amino-acid chain; its full sequence is NADH-quinone oxidoreductase subunit C (200 aa).

The protein belongs to the complex I 30 kDa subunit family. NDH-1 is composed of 14 different subunits. Subunits NuoB, C, D, E, F, and G constitute the peripheral sector of the complex.

The protein resides in the cell inner membrane. The catalysed reaction is a quinone + NADH + 5 H(+)(in) = a quinol + NAD(+) + 4 H(+)(out). NDH-1 shuttles electrons from NADH, via FMN and iron-sulfur (Fe-S) centers, to quinones in the respiratory chain. The immediate electron acceptor for the enzyme in this species is believed to be ubiquinone. Couples the redox reaction to proton translocation (for every two electrons transferred, four hydrogen ions are translocated across the cytoplasmic membrane), and thus conserves the redox energy in a proton gradient. This Burkholderia thailandensis (strain ATCC 700388 / DSM 13276 / CCUG 48851 / CIP 106301 / E264) protein is NADH-quinone oxidoreductase subunit C.